Here is a 2045-residue protein sequence, read N- to C-terminus: Non-reducing polyketide synthase pks27 (2045 aa).

The tract at residues 10 to 247 (IVFGDLTCDS…LTIPIYAPYH (238 aa)) is N-terminal acylcarrier protein transacylase domain (SAT). One can recognise a Ketosynthase family 3 (KS3) domain in the interval 380 to 813 (HSKLAIIGYS…GGNSSVLIED (434 aa)). Catalysis depends on for beta-ketoacyl synthase activity residues C552, H687, and H731. The tract at residues 913-1213 (FAFTGQGSQY…VPTLQRNKDT (301 aa)) is malonyl-CoA:ACP transacylase (MAT) domain. Residues 1289 to 1422 (HKLVEEKKDG…ASITFPDAKA (134 aa)) form an N-terminal hotdog fold region. The PKS/mFAS DH domain maps to 1289–1599 (HKLVEEKKDG…AQGVPRRLMD (311 aa)). The active-site Proton acceptor; for dehydratase activity is H1321. The tract at residues 1442-1599 (AARLNTDDRV…AQGVPRRLMD (158 aa)) is C-terminal hotdog fold. The active-site Proton donor; for dehydratase activity is the D1511. The disordered stretch occupies residues 1612–1636 (APAGGTLNASQSAAANPAADPSAQA). Residues 1619–1636 (NASQSAAANPAADPSAQA) show a composition bias toward low complexity. The Carrier domain maps to 1635–1712 (QADSDNWQAA…ELEAFWKQGA (78 aa)). Residues 1640-1709 (NWQAALKIIS…TIKELEAFWK (70 aa)) form a product template (PT) domain region. Residue S1672 is modified to O-(pantetheine 4'-phosphoryl)serine. The tract at residues 1735–1776 (EAEVDQDKNSSDEDRSSLGTSSYEVISPNTTETTPEITKTSS) is disordered. Positions 1739–1750 (DQDKNSSDEDRS) are enriched in basic and acidic residues. Over residues 1760-1776 (ISPNTTETTPEITKTSS) the composition is skewed to low complexity. Positions 1798–2039 (TLFLLPDGSG…AKRLSEMIEG (242 aa)) are thioesterase.

Requires pantetheine 4'-phosphate as cofactor.

It participates in secondary metabolite biosynthesis. Non-reducing polyketide synthase (NRPKS); part of the gene cluster 27 that mediates the biosynthesis of asparasone A, a sclerotium-specific anthraquinone pigment important for sclerotial survival. Catalyzes the formation of the aromatic polyketide from acetyl coenzyme A and seven malonyl coenzyme A molecules. Through its product template (PT) domain, catalyzes the cyclization of polyketide backbone via C6-C11 aldolcondensation. In Aspergillus flavus (strain ATCC 200026 / FGSC A1120 / IAM 13836 / NRRL 3357 / JCM 12722 / SRRC 167), this protein is Non-reducing polyketide synthase pks27.